Reading from the N-terminus, the 415-residue chain is MEQIWLLLLLTIRVLPGSAQFNGYNCDANLHSRFPAERDISVYCGVQAITMKINFCTVLFSGYSETDLALNGRHGDSHCRGFINNNTFPAVVIFIINLSTLEGCGNNLVVSTIPGVSAYGNATSVQVGNISGYIDTPDPPTIISYLPGLLYKFSCSYPLEYLVNNTQLASSSAAISVRENNGTFVSTLNLLLYNDSTYNQQLIIPSIGLPLKTKVFAAVQATNLDGRWNVLMDYCYTTPSGNPNDDIRYDLFLSCDKDPQTTVIENGRSQRGRFSFEVFRFVKHKNQKMSTVFLHCVTKLCRADDCPFLMPICSHRERRDAGRRTTWSPQSSSGSAVLSAGPIITRSDETPTNNSQLGSPSMPPFQLNAITSALISGMVILGVTSFSLLLCSLALLHRKGPTSLVLNGIRNPVFD.

A signal peptide spans 1–19 (MEQIWLLLLLTIRVLPGSA). At 20–372 (QFNGYNCDAN…PPFQLNAITS (353 aa)) the chain is on the extracellular side. One can recognise a ZP domain in the interval 43–320 (YCGVQAITMK…PICSHRERRD (278 aa)). Intrachain disulfides connect Cys-44-Cys-155 and Cys-79-Cys-104. Asn-121 and Asn-164 each carry an N-linked (GlcNAc...) asparagine glycan. Disulfide bonds link Cys-235-Cys-296 and Cys-255-Cys-313. The tract at residues 323–360 (RRTTWSPQSSSGSAVLSAGPIITRSDETPTNNSQLGSP) is disordered. Composition is skewed to polar residues over residues 325–336 (TTWSPQSSSGSA) and 350–359 (TPTNNSQLGS). The chain crosses the membrane as a helical span at residues 373–393 (ALISGMVILGVTSFSLLLCSL). Residues 394 to 415 (ALLHRKGPTSLVLNGIRNPVFD) lie on the Cytoplasmic side of the membrane.

In terms of processing, proteolytically cleaved before the transmembrane segment to yield the secreted form found in the extracellular matrix of the cupula. As to expression, detected in placenta, kidney, lung, pancreas and at very low level in other tissues.

It localises to the cytoplasmic vesicle membrane. It is found in the secreted. The protein resides in the extracellular space. The protein localises to the extracellular matrix. Glycoprotein which is a component of the gelatinous extracellular matrix in the cupulae of the vestibular organ. The polypeptide is Zona pellucida-like domain-containing protein 1 (ZPLD1) (Homo sapiens (Human)).